The following is a 477-amino-acid chain: tRNA-2-methylthio-N(6)-dimethylallyladenosine synthase (477 aa).

Positions 3–120 (KKLYIKTWGC…LPEMINELKG (118 aa)) constitute an MTTase N-terminal domain. [4Fe-4S] cluster is bound by residues cysteine 12, cysteine 49, cysteine 83, cysteine 157, cysteine 161, and cysteine 164. Residues 143-375 (RAEGPTAFVS…QQRITQQALR (233 aa)) form the Radical SAM core domain. In terms of domain architecture, TRAM spans 378 to 441 (RHMVGTEQRI…TNSLRGEVVR (64 aa)).

Belongs to the methylthiotransferase family. MiaB subfamily. In terms of assembly, monomer. Requires [4Fe-4S] cluster as cofactor.

It localises to the cytoplasm. It carries out the reaction N(6)-dimethylallyladenosine(37) in tRNA + (sulfur carrier)-SH + AH2 + 2 S-adenosyl-L-methionine = 2-methylsulfanyl-N(6)-dimethylallyladenosine(37) in tRNA + (sulfur carrier)-H + 5'-deoxyadenosine + L-methionine + A + S-adenosyl-L-homocysteine + 2 H(+). Its function is as follows. Catalyzes the methylthiolation of N6-(dimethylallyl)adenosine (i(6)A), leading to the formation of 2-methylthio-N6-(dimethylallyl)adenosine (ms(2)i(6)A) at position 37 in tRNAs that read codons beginning with uridine. The polypeptide is tRNA-2-methylthio-N(6)-dimethylallyladenosine synthase (Alteromonas mediterranea (strain DSM 17117 / CIP 110805 / LMG 28347 / Deep ecotype)).